A 137-amino-acid polypeptide reads, in one-letter code: Small ribosomal subunit protein uS12 (137 aa).

The tract at residues 1 to 26 (MPTINQLVTKGRKRKASKTKSPALNQ) is disordered.

It belongs to the universal ribosomal protein uS12 family. In terms of assembly, part of the 30S ribosomal subunit. Contacts proteins S8 and S17. May interact with IF1 in the 30S initiation complex.

With S4 and S5 plays an important role in translational accuracy. Functionally, interacts with and stabilizes bases of the 16S rRNA that are involved in tRNA selection in the A site and with the mRNA backbone. Located at the interface of the 30S and 50S subunits, it traverses the body of the 30S subunit contacting proteins on the other side and probably holding the rRNA structure together. The combined cluster of proteins S8, S12 and S17 appears to hold together the shoulder and platform of the 30S subunit. The sequence is that of Small ribosomal subunit protein uS12 from Mycoplasmopsis pulmonis (strain UAB CTIP) (Mycoplasma pulmonis).